Consider the following 471-residue polypeptide: Ribulose bisphosphate carboxylase large chain (471 aa).

Positions 115 and 165 each coordinate substrate. Catalysis depends on Lys167, which acts as the Proton acceptor. Lys169 provides a ligand contact to substrate. Mg(2+) contacts are provided by Lys193, Asp195, and Glu196. N6-carboxylysine is present on Lys193. His286 serves as the catalytic Proton acceptor. Positions 287, 319, and 371 each coordinate substrate.

Belongs to the RuBisCO large chain family. Type I subfamily. Heterohexadecamer of 8 large chains and 8 small chains. Requires Mg(2+) as cofactor.

It is found in the carboxysome. The catalysed reaction is 2 (2R)-3-phosphoglycerate + 2 H(+) = D-ribulose 1,5-bisphosphate + CO2 + H2O. It carries out the reaction D-ribulose 1,5-bisphosphate + O2 = 2-phosphoglycolate + (2R)-3-phosphoglycerate + 2 H(+). Its function is as follows. RuBisCO catalyzes two reactions: the carboxylation of D-ribulose 1,5-bisphosphate, the primary event in carbon dioxide fixation, as well as the oxidative fragmentation of the pentose substrate in the photorespiration process. Both reactions occur simultaneously and in competition at the same active site. The chain is Ribulose bisphosphate carboxylase large chain from Prochlorococcus marinus (strain MIT 9515).